Consider the following 224-residue polypeptide: Proteasome subunit beta (224 aa).

The propeptide at 1-6 (MDVMKG) is removed in mature form; by autocatalysis. The active-site Nucleophile is Thr7.

It belongs to the peptidase T1B family. In terms of assembly, the 20S proteasome core is composed of 14 alpha and 14 beta subunits that assemble into four stacked heptameric rings, resulting in a barrel-shaped structure. The two inner rings, each composed of seven catalytic beta subunits, are sandwiched by two outer rings, each composed of seven alpha subunits. The catalytic chamber with the active sites is on the inside of the barrel. Has a gated structure, the ends of the cylinder being occluded by the N-termini of the alpha-subunits. Is capped at one or both ends by the proteasome regulatory ATPase, PAN.

Its subcellular location is the cytoplasm. The enzyme catalyses Cleavage of peptide bonds with very broad specificity.. With respect to regulation, the formation of the proteasomal ATPase PAN-20S proteasome complex, via the docking of the C-termini of PAN into the intersubunit pockets in the alpha-rings, triggers opening of the gate for substrate entry. Interconversion between the open-gate and close-gate conformations leads to a dynamic regulation of the 20S proteasome proteolysis activity. Functionally, component of the proteasome core, a large protease complex with broad specificity involved in protein degradation. The chain is Proteasome subunit beta from Methanocaldococcus sp. (strain FS406-22).